Reading from the N-terminus, the 347-residue chain is NADH-ubiquinone oxidoreductase chain 2 (347 aa).

Helical transmembrane passes span 1 to 21, 25 to 45, 59 to 79, 96 to 116, 127 to 147, 149 to 169, 178 to 198, 201 to 221, 240 to 260, 274 to 294, and 326 to 346; these read MNPA…MIVT, HWLT…PILM, YFLT…INLV, ITMT…FWVP, GLIL…QISP, INLE…GWGG, IMAY…AYNP, TLLN…MLML, LATT…LSGF, DSII…YFYM, and ISPL…LTLL.

Belongs to the complex I subunit 2 family. In terms of assembly, core subunit of respiratory chain NADH dehydrogenase (Complex I) which is composed of 45 different subunits. Interacts with TMEM242.

The protein resides in the mitochondrion inner membrane. The enzyme catalyses a ubiquinone + NADH + 5 H(+)(in) = a ubiquinol + NAD(+) + 4 H(+)(out). Core subunit of the mitochondrial membrane respiratory chain NADH dehydrogenase (Complex I) which catalyzes electron transfer from NADH through the respiratory chain, using ubiquinone as an electron acceptor. Essential for the catalytic activity and assembly of complex I. This is NADH-ubiquinone oxidoreductase chain 2 from Dobsonia minor (Lesser bare-backed fruit bat).